Here is a 387-residue protein sequence, read N- to C-terminus: Phosphoglycerate kinase (387 aa).

Substrate-binding positions include 21–23 (DLN), Arg-36, 59–62 (HLGR), Arg-113, and Arg-146. Residues Lys-197, Glu-314, and 340-343 (GGDT) each bind ATP.

This sequence belongs to the phosphoglycerate kinase family. Monomer.

Its subcellular location is the cytoplasm. The catalysed reaction is (2R)-3-phosphoglycerate + ATP = (2R)-3-phospho-glyceroyl phosphate + ADP. It participates in carbohydrate degradation; glycolysis; pyruvate from D-glyceraldehyde 3-phosphate: step 2/5. This is Phosphoglycerate kinase from Pseudomonas putida (strain ATCC 47054 / DSM 6125 / CFBP 8728 / NCIMB 11950 / KT2440).